Reading from the N-terminus, the 487-residue chain is Glutamyl-tRNA(Gln) amidotransferase subunit A (487 aa).

Catalysis depends on charge relay system residues lysine 79 and serine 158. The active-site Acyl-ester intermediate is serine 182.

This sequence belongs to the amidase family. GatA subfamily. Heterotrimer of A, B and C subunits.

It carries out the reaction L-glutamyl-tRNA(Gln) + L-glutamine + ATP + H2O = L-glutaminyl-tRNA(Gln) + L-glutamate + ADP + phosphate + H(+). In terms of biological role, allows the formation of correctly charged Gln-tRNA(Gln) through the transamidation of misacylated Glu-tRNA(Gln) in organisms which lack glutaminyl-tRNA synthetase. The reaction takes place in the presence of glutamine and ATP through an activated gamma-phospho-Glu-tRNA(Gln). The protein is Glutamyl-tRNA(Gln) amidotransferase subunit A of Ehrlichia ruminantium (strain Gardel).